Reading from the N-terminus, the 143-residue chain is Succinate dehydrogenase assembly factor 2, mitochondrial (143 aa).

It belongs to the SDHAF2 family. In terms of assembly, interacts with the flavoprotein subunit within the SDH catalytic dimer.

The protein resides in the mitochondrion matrix. Functionally, plays an essential role in the assembly of succinate dehydrogenase (SDH), an enzyme complex (also referred to as respiratory complex II) that is a component of both the tricarboxylic acid (TCA) cycle and the mitochondrial electron transport chain, and which couples the oxidation of succinate to fumarate with the reduction of ubiquinone (coenzyme Q) to ubiquinol. Required for flavinylation (covalent attachment of FAD) of the flavoprotein subunit of the SDH catalytic dimer. The protein is Succinate dehydrogenase assembly factor 2, mitochondrial of Schizosaccharomyces japonicus (strain yFS275 / FY16936) (Fission yeast).